The chain runs to 399 residues: Subtilisin-like protease 4 (399 aa).

The signal sequence occupies residues 1–19 (MVCLKTLSVFLAAFAAADA). Positions 20-118 (RAVFKTQGHK…VEQDQVVRIS (99 aa)) are excised as a propeptide. The 80-residue stretch at 38–117 (YIVVMKDGVS…YVEQDQVVRI (80 aa)) folds into the Inhibitor I9 domain. N-linked (GlcNAc...) asparagine glycosylation occurs at Asn102. Residues 128 to 399 (SWGLGRVSHR…NRLLYNGSGQ (272 aa)) form the Peptidase S8 domain. Active-site charge relay system residues include Asp160 and His191. N-linked (GlcNAc...) asparagine glycans are attached at residues Asn252 and Asn308. The active-site Charge relay system is the Ser346. A glycan (N-linked (GlcNAc...) asparagine) is linked at Asn395.

The protein belongs to the peptidase S8 family.

The protein resides in the secreted. Its function is as follows. Secreted subtilisin-like serine protease with keratinolytic activity that contributes to pathogenicity. This Trichophyton tonsurans (Scalp ringworm fungus) protein is Subtilisin-like protease 4 (SUB4).